Consider the following 140-residue polypeptide: Methylglyoxal synthase (140 aa).

An MGS-like domain is found at 1–140; sequence MKIALIAHDR…HDQDSNPINL (140 aa). Substrate contacts are provided by residues histidine 8, lysine 12, 34–37, and 54–55; these read TGTT and SG. Aspartate 60 (proton donor/acceptor) is an active-site residue. Histidine 87 lines the substrate pocket.

The protein belongs to the methylglyoxal synthase family.

The catalysed reaction is dihydroxyacetone phosphate = methylglyoxal + phosphate. Functionally, catalyzes the formation of methylglyoxal from dihydroxyacetone phosphate. The chain is Methylglyoxal synthase from Latilactobacillus sakei subsp. sakei (strain 23K) (Lactobacillus sakei subsp. sakei).